The following is a 31-amino-acid chain: Cytolysin Oshem 2 (31 aa).

The protein localises to the secreted. Its subcellular location is the nematocyst. The protein resides in the target cell membrane. Cytolysin that shows weak hemolysis and weak myonecrosis. This Olindias sambaquiensis (Hydromedusa) protein is Cytolysin Oshem 2.